The primary structure comprises 533 residues: Peptide chain release factor 3 (533 aa).

A tr-type G domain is found at 9–284 (ARRRTFAIIS…ALCQLSPPPL (276 aa)). GTP contacts are provided by residues 18–25 (SHPDAGKT), 95–99 (DTPGH), and 149–152 (NKLD).

The protein belongs to the TRAFAC class translation factor GTPase superfamily. Classic translation factor GTPase family. PrfC subfamily.

The protein localises to the cytoplasm. Its function is as follows. Increases the formation of ribosomal termination complexes and stimulates activities of RF-1 and RF-2. It binds guanine nucleotides and has strong preference for UGA stop codons. It may interact directly with the ribosome. The stimulation of RF-1 and RF-2 is significantly reduced by GTP and GDP, but not by GMP. The polypeptide is Peptide chain release factor 3 (Cupriavidus pinatubonensis (strain JMP 134 / LMG 1197) (Cupriavidus necator (strain JMP 134))).